A 238-amino-acid polypeptide reads, in one-letter code: Flagellar L-ring protein (238 aa).

An N-terminal signal peptide occupies residues 1-17 (MKRRLLAAGCAMLLLSG). A lipid anchor (N-palmitoyl cysteine) is attached at Cys-18. Cys-18 carries S-diacylglycerol cysteine lipidation. The tract at residues 22–50 (RQQPSPVPPVTQPQAYAEPEDTAANPGSL) is disordered.

This sequence belongs to the FlgH family. In terms of assembly, the basal body constitutes a major portion of the flagellar organelle and consists of four rings (L,P,S, and M) mounted on a central rod.

It localises to the cell outer membrane. Its subcellular location is the bacterial flagellum basal body. Assembles around the rod to form the L-ring and probably protects the motor/basal body from shearing forces during rotation. The protein is Flagellar L-ring protein of Nitratidesulfovibrio vulgaris (strain DSM 19637 / Miyazaki F) (Desulfovibrio vulgaris).